The primary structure comprises 351 residues: Protein-glutamate methylesterase/protein-glutamine glutaminase (351 aa).

The Response regulatory domain occupies 3 to 120 (KTLVVDDSAL…EISKIENELV (118 aa)). At D54 the chain carries 4-aspartylphosphate. Residues 160 to 347 (ILIGSSTGGP…EQIVRMIEVK (188 aa)) enclose the CheB-type methylesterase domain. Residues S165, H192, and D289 contribute to the active site.

Belongs to the CheB family. Post-translationally, phosphorylated by CheA. Phosphorylation of the N-terminal regulatory domain activates the methylesterase activity.

The protein resides in the cytoplasm. It carries out the reaction [protein]-L-glutamate 5-O-methyl ester + H2O = L-glutamyl-[protein] + methanol + H(+). The catalysed reaction is L-glutaminyl-[protein] + H2O = L-glutamyl-[protein] + NH4(+). Its function is as follows. Involved in chemotaxis. Part of a chemotaxis signal transduction system that modulates chemotaxis in response to various stimuli. Catalyzes the demethylation of specific methylglutamate residues introduced into the chemoreceptors (methyl-accepting chemotaxis proteins or MCP) by CheR. Also mediates the irreversible deamidation of specific glutamine residues to glutamic acid. This is Protein-glutamate methylesterase/protein-glutamine glutaminase from Methanococcoides burtonii (strain DSM 6242 / NBRC 107633 / OCM 468 / ACE-M).